Reading from the N-terminus, the 142-residue chain is Large ribosomal subunit protein uL13 (142 aa).

This sequence belongs to the universal ribosomal protein uL13 family. As to quaternary structure, part of the 50S ribosomal subunit.

Functionally, this protein is one of the early assembly proteins of the 50S ribosomal subunit, although it is not seen to bind rRNA by itself. It is important during the early stages of 50S assembly. This Acinetobacter baumannii (strain AB0057) protein is Large ribosomal subunit protein uL13.